The sequence spans 263 residues: Protein maestro (263 aa).

A disordered region spans residues 1-21 (MDQTPRRMLGQPLSSPATQPK). An HEAT repeat occupies 128–163 (SFFIDITLQTRTLLDDENDSLRYSAFVLFGQLADLA).

It localises to the nucleus. The protein localises to the nucleolus. The sequence is that of Protein maestro (MRO) from Bos taurus (Bovine).